The sequence spans 96 residues: Small ribosomal subunit protein bS18c (96 aa).

Belongs to the bacterial ribosomal protein bS18 family. Part of the 30S ribosomal subunit.

It localises to the plastid. Its subcellular location is the chloroplast. The sequence is that of Small ribosomal subunit protein bS18c (rps18) from Pinus thunbergii (Japanese black pine).